Consider the following 459-residue polypeptide: MSKIVVVGANHAGTACINTMLDNFGNENEIVVFDQNSNISFLGCGMALWIGEQIDGAEGLFYSDKEKLEAKGAKVYMNSPVLSIDYDNKVVTAEVEGKEHKESYEKLIFATGSTPILPPIEGVEIVKGNREFKATLENVQFVKLYQNAEEVINKLSDKSQHLDRIAVVGGGYIGVELAEAFERLGKEVVLVDIVDTVLNGYYDKDFTQMMAKNLEDHNIRLALGQTVKAIEGDGKVERLITDKESFDVDMVILAVGFRPNTALAGGKIELFRNGAFLVDKKQETSIPDVYAVGDCATVYDNARKDTSYIALASNAVRTGIVGAYNACGHELEGIGVQGSNGISIYGLHMVSTGLTLEKAKAAGYNATETGFNDLQKPEFMKHDNHEVAIKIVFDKDSREILGAQMVSHDIAISMGIHMFSLAIQEHVTIDKLALTDLFFLPHFNKPYNYITMAALTAEK.

FAD is bound at residue N10. The active-site Proton acceptor is the H11. The FAD site is built by A12, D34, Q35, C44, V81, A110, S113, K143, and Y172. C44 acts as the Redox-active in catalysis. Residue C44 is modified to Cysteine sulfinic acid (-SO2H). 4 residues coordinate NAD(+): I173, D192, Y201, and G256. D294 lines the FAD pocket. A310 serves as a coordination point for NAD(+). FAD contacts are provided by L311, A312, and S313. NAD(+) is bound at residue G341. F439 lines the FAD pocket.

The protein belongs to the class-III pyridine nucleotide-disulfide oxidoreductase family. FAD is required as a cofactor.

It localises to the secreted. The protein resides in the cell wall. It catalyses the reaction 2 NADH + O2 + 2 H(+) = 2 NAD(+) + 2 H2O. Functionally, catalyzes the four-electron reduction of molecular oxygen to water. Plays a role in redox balance maintenance. May be involved in mediating bacterial adhesion to host cells. May be considered a potential virulence factor. The sequence is that of NADH oxidase from Streptococcus pneumoniae serotype 4 (strain ATCC BAA-334 / TIGR4).